Reading from the N-terminus, the 373-residue chain is MEFKLKHKDGMARVCEITTAHSTFLTPVFMPVGTVGAVKSLDANDMKNELDAKIILANTYHMYLRPTSKVVKDFGGLHGFTKFDRSFLTDSGGFQAFSLSKNSKHFNEGIEFKSHIDGSRHLFTPKSVLDAQYDFNSDIMMILDDLVALPATKERVKISVDRTILWAKEAITYHKNMQNKGIGIGQNIFGIIQGGTDYEERKRCALSLNEMPFDGLAIGGLSVGEENALMYETVQNLNPYLDENRPRYLMGVGTPEDLVENVERGVDMFDCVMPTRNARNGTFFTSFGKFNIKKAEFINDHEVIDPTCSCYTCRNFSRGYLNHLFKAKELTFFRLASLHNLHYYLELARKMREAILNNSFTQFKRNFYHLRGK.

The active-site Proton acceptor is aspartate 90. Substrate is bound by residues 90–94 (DSGGF), aspartate 144, glutamine 193, and glycine 220. Residues 251–257 (GVGTPED) form an RNA binding region. The active-site Nucleophile is aspartate 270. Positions 275-279 (TRNAR) are RNA binding; important for wobble base 34 recognition. Zn(2+) is bound by residues cysteine 308, cysteine 310, cysteine 313, and histidine 339.

It belongs to the queuine tRNA-ribosyltransferase family. In terms of assembly, homodimer. Within each dimer, one monomer is responsible for RNA recognition and catalysis, while the other monomer binds to the replacement base PreQ1. Zn(2+) is required as a cofactor.

The catalysed reaction is 7-aminomethyl-7-carbaguanine + guanosine(34) in tRNA = 7-aminomethyl-7-carbaguanosine(34) in tRNA + guanine. It participates in tRNA modification; tRNA-queuosine biosynthesis. Its function is as follows. Catalyzes the base-exchange of a guanine (G) residue with the queuine precursor 7-aminomethyl-7-deazaguanine (PreQ1) at position 34 (anticodon wobble position) in tRNAs with GU(N) anticodons (tRNA-Asp, -Asn, -His and -Tyr). Catalysis occurs through a double-displacement mechanism. The nucleophile active site attacks the C1' of nucleotide 34 to detach the guanine base from the RNA, forming a covalent enzyme-RNA intermediate. The proton acceptor active site deprotonates the incoming PreQ1, allowing a nucleophilic attack on the C1' of the ribose to form the product. After dissociation, two additional enzymatic reactions on the tRNA convert PreQ1 to queuine (Q), resulting in the hypermodified nucleoside queuosine (7-(((4,5-cis-dihydroxy-2-cyclopenten-1-yl)amino)methyl)-7-deazaguanosine). The protein is Queuine tRNA-ribosyltransferase of Campylobacter jejuni (strain RM1221).